The following is a 556-amino-acid chain: 2-succinyl-5-enolpyruvyl-6-hydroxy-3-cyclohexene-1-carboxylate synthase (556 aa).

The protein belongs to the TPP enzyme family. MenD subfamily. In terms of assembly, homodimer. The cofactor is Mg(2+). Requires Mn(2+) as cofactor. It depends on thiamine diphosphate as a cofactor.

It catalyses the reaction isochorismate + 2-oxoglutarate + H(+) = 5-enolpyruvoyl-6-hydroxy-2-succinyl-cyclohex-3-ene-1-carboxylate + CO2. Its pathway is quinol/quinone metabolism; 1,4-dihydroxy-2-naphthoate biosynthesis; 1,4-dihydroxy-2-naphthoate from chorismate: step 2/7. It participates in quinol/quinone metabolism; menaquinone biosynthesis. Its function is as follows. Catalyzes the thiamine diphosphate-dependent decarboxylation of 2-oxoglutarate and the subsequent addition of the resulting succinic semialdehyde-thiamine pyrophosphate anion to isochorismate to yield 2-succinyl-5-enolpyruvyl-6-hydroxy-3-cyclohexene-1-carboxylate (SEPHCHC). In Escherichia coli (strain ATCC 8739 / DSM 1576 / NBRC 3972 / NCIMB 8545 / WDCM 00012 / Crooks), this protein is 2-succinyl-5-enolpyruvyl-6-hydroxy-3-cyclohexene-1-carboxylate synthase.